We begin with the raw amino-acid sequence, 20 residues long: Small ribosomal subunit protein bS20 (20 aa).

This sequence belongs to the bacterial ribosomal protein bS20 family.

Functionally, binds directly to 16S ribosomal RNA. The chain is Small ribosomal subunit protein bS20 (rpsT) from Brevundimonas diminuta (Pseudomonas diminuta).